The primary structure comprises 1832 residues: Multifunctional protein pyr-3 (1832 aa).

Residues 2–400 (AATVYRPATA…PGPRDTEFLF (399 aa)) form a GATase (Glutamine amidotransferase) region. L-glutamine-binding residues include Ser-64, Gly-273, and Gly-275. The Glutamine amidotransferase type-1 domain maps to 228–413 (RILCLDVGMK…IQTVAKCTTD (186 aa)). Residue Cys-302 is the Nucleophile; for GATase activity of the active site. L-glutamine is bound by residues Leu-303, Gln-306, Asn-344, Gly-346, and Tyr-347. Residues His-386 and Glu-388 each act as for GATase activity in the active site. The interval 401–442 (DVFIQTVAKCTTDNTLLQKGVEFPGGTTEENERLHPRVDVKK) is linker. The interval 443–983 (VLVLGSGGLS…SEHDVSFEDR (541 aa)) is CPSase A. A CPSase (Carbamoyl phosphate synthase) region spans residues 443–1484 (VLVLGSGGLS…TNVKNAKILV (1042 aa)). ATP is bound by residues Arg-560, Arg-600, Gly-606, Gly-607, Arg-637, Met-639, Glu-644, Gly-670, Ile-671, His-672, Gln-713, and Glu-727. ATP-grasp domains are found at residues 564 to 756 (ARSM…KLGL) and 1102 to 1293 (SRML…KAIM). 3 residues coordinate Mg(2+): Gln-713, Glu-727, and Asn-729. Gln-713, Glu-727, and Asn-729 together coordinate Mn(2+). The CPSase B stretch occupies residues 984–1484 (GVMVLGSGVY…TNVKNAKILV (501 aa)). The ATP site is built by Arg-1138, Lys-1177, Ile-1179, Glu-1184, Gly-1209, Val-1210, His-1211, Ser-1212, Gln-1252, and Glu-1264. Positions 1252, 1264, and 1266 each coordinate Mg(2+). The Mn(2+) site is built by Gln-1252, Glu-1264, and Asn-1266. The 149-residue stretch at 1359–1507 (FKVPKKNILL…RDYQTSHTPL (149 aa)) folds into the MGS-like domain. The tract at residues 1485 to 1528 (EAIARYRDMEIGERDYQTSHTPLQLSGQVNFTLQDSLSRPHSFK) is linker. An ATCase (Aspartate transcarbamylase) region spans residues 1529–1832 (KAHVLSVEQY…MALLALVMSG (304 aa)). 2 residues coordinate carbamoyl phosphate: Arg-1581 and Thr-1582. Residue Lys-1609 participates in L-aspartate binding. 3 residues coordinate carbamoyl phosphate: Arg-1630, His-1658, and Gln-1661. 2 residues coordinate L-aspartate: Arg-1691 and Arg-1754. The carbamoyl phosphate site is built by Leu-1793 and Pro-1794.

The protein in the N-terminal section; belongs to the CarA family. In the central section; belongs to the CarB family. This sequence in the C-terminal section; belongs to the aspartate/ornithine carbamoyltransferase superfamily. ATCase family. The cofactor is Mg(2+). Mn(2+) is required as a cofactor.

The protein resides in the cytoplasm. Its subcellular location is the nucleus. The catalysed reaction is hydrogencarbonate + L-glutamine + 2 ATP + H2O = carbamoyl phosphate + L-glutamate + 2 ADP + phosphate + 2 H(+). It carries out the reaction L-glutamine + H2O = L-glutamate + NH4(+). It catalyses the reaction hydrogencarbonate + NH4(+) + 2 ATP = carbamoyl phosphate + 2 ADP + phosphate + 2 H(+). The enzyme catalyses carbamoyl phosphate + L-aspartate = N-carbamoyl-L-aspartate + phosphate + H(+). It functions in the pathway pyrimidine metabolism; UMP biosynthesis via de novo pathway; (S)-dihydroorotate from bicarbonate: step 1/3. Its pathway is pyrimidine metabolism; UMP biosynthesis via de novo pathway; (S)-dihydroorotate from bicarbonate: step 2/3. Its activity is regulated as follows. Both CPSase and ATCase activities are feedback inhibited by the end product UTP. Multifunctional protein that encodes the first 2 enzymatic activities of the de novo pyrimidine pathway: carbamoylphosphate synthetase (CPSase; EC 6.3.5.5) and aspartate transcarbamylase (ATCase; EC 2.1.3.2). The CPSase-function is accomplished in 2 steps, by a glutamine-dependent amidotransferase activity (GATase) that binds and cleaves glutamine to produce ammonia, followed by an ammonium-dependent carbamoyl phosphate synthetase, which reacts with the ammonia, hydrogencarbonate and ATP to form carbamoyl phosphate. The endogenously produced carbamoyl phosphate is sequestered and channeled to the ATCase active site. ATCase then catalyzes the formation of carbamoyl-L-aspartate from L-aspartate and carbamoyl phosphate. The chain is Multifunctional protein pyr-3 (pyr-3) from Neurospora crassa (strain ATCC 24698 / 74-OR23-1A / CBS 708.71 / DSM 1257 / FGSC 987).